We begin with the raw amino-acid sequence, 787 residues long: Disintegrin and metalloproteinase domain-containing protein 32 (787 aa).

A signal peptide spans Met1–Ala16. Ser17 carries the phosphoserine modification. The propeptide occupies Ser17 to Glu174. Residues Asn39 and Asn125 are each glycosylated (N-linked (GlcNAc...) asparagine). Residues Lys175 to Thr682 lie on the Extracellular side of the membrane. The region spanning Leu186 to Pro383 is the Peptidase M12B domain. Disulfide bonds link Cys295–Cys378, Cys337–Cys362, Cys339–Cys344, and Cys450–Cys471. The Disintegrin domain occupies Lys391–Asn479. Residues Asn465 and Asn598 are each glycosylated (N-linked (GlcNAc...) asparagine). Residues Ser622 to Gln654 form the EGF-like domain. 3 disulfide bridges follow: Cys626–Cys636, Cys630–Cys642, and Cys644–Cys653. A helical transmembrane segment spans residues Trp683 to Ala703. The Cytoplasmic segment spans residues Arg704–Asn787. The disordered stretch occupies residues Glu715–Asn787. Over residues Thr728 to Arg749 the composition is skewed to polar residues. The span at Thr771–Asn787 shows a compositional bias: low complexity.

In terms of tissue distribution, testis specific.

Its subcellular location is the membrane. In terms of biological role, may play a role in sperm development and fertilization This is a non-catalytic metalloprotease-like protein. This is Disintegrin and metalloproteinase domain-containing protein 32 (ADAM32) from Homo sapiens (Human).